A 756-amino-acid polypeptide reads, in one-letter code: Sodium/hydrogen exchanger 8 (756 aa).

Over 1–31 (MTSIIGAALPYKSPEKAIASSSYSAENDSSP) the chain is Extracellular. Asn-27 carries N-linked (GlcNAc...) asparagine glycosylation. Residues 32–52 (VDAVIFAGTSLVLGTACRYLF) traverse the membrane as a helical segment. Over 53-56 (NGTR) the chain is Cytoplasmic. A helical transmembrane segment spans residues 57 to 77 (VPYTVVLLVIGIFLGSLEYGT). Over 78–89 (KHNLGKLGHGIR) the chain is Extracellular. Residues 90–110 (IWNGINPDLLLAVFLPVLLFE) form a helical membrane-spanning segment. Residues 111-125 (SSFSMDVHQIKRCMG) lie on the Cytoplasmic side of the membrane. A helical transmembrane segment spans residues 126–146 (QMVLLAGPGVLISTFCLGALI). At 147–157 (KLTFPYNWDWK) the chain is on the extracellular side. The chain crosses the membrane as a helical span at residues 158 to 178 (TSLLLGGLLGATDPVAVVALL). At 179–194 (KELGASKKMTTLIDGE) the chain is on the cytoplasmic side. Residues 195–215 (SLMNDGVSVVVFQLFFKMVMG) form a helical membrane-spanning segment. Topologically, residues 216–225 (HNSDWGSIIK) are extracellular. The helical transmembrane segment at 226–248 (FLVQNSFGAVGIGLAFGIASVFW) threads the bilayer. The Cytoplasmic segment spans residues 249–251 (LKF). The chain crosses the membrane as a helical span at residues 252-271 (IFNDTVAQITVTLSASYFAY). At 272–276 (YTAQE) the chain is on the extracellular side. Residues 277 to 297 (WAGVSGILTVMILGMFFAAFA) form a helical membrane-spanning segment. Residues 298–311 (RTAFKGDSHQSLHH) lie on the Cytoplasmic side of the membrane. A helical transmembrane segment spans residues 312–332 (FWEMAAYIANTLVFMLSGVII). Residues 333–350 (AESVLSGQTISYKGNSWS) are Extracellular-facing. The helical transmembrane segment at 351 to 371 (FLFLLYLYVQLSRCVVVGVLY) threads the bilayer. Over 372 to 385 (PLLCRSGYGLDWKE) the chain is Cytoplasmic. A helical transmembrane segment spans residues 386–406 (SIILTWSGLRGAVSLSLALSV). Residues 407 to 422 (KQSSGNSYLSSDTGTR) lie on the Extracellular side of the membrane. A helical transmembrane segment spans residues 423–443 (FLFLTGGIVFLTLVVNGSTTQ). Residues 444-756 (LLLHLLRMDT…RSLAIGETDA (313 aa)) lie on the Cytoplasmic side of the membrane.

The protein belongs to the monovalent cation:proton antiporter 1 (CPA1) transporter (TC 2.A.36) family.

The protein localises to the cell membrane. It carries out the reaction Na(+)(in) + H(+)(out) = Na(+)(out) + H(+)(in). The catalysed reaction is K(+)(in) + H(+)(out) = K(+)(out) + H(+)(in). May act in low affinity electroneutral exchange of protons for cations such as Na(+) or K(+) across membranes. May also exchange Li(+) and Cs(+) with a lower affinity. In Arabidopsis thaliana (Mouse-ear cress), this protein is Sodium/hydrogen exchanger 8 (NHX8).